Here is a 300-residue protein sequence, read N- to C-terminus: Protoheme IX farnesyltransferase (300 aa).

Transmembrane regions (helical) follow at residues 26–46 (VVQL…PGLP), 54–74 (IAWA…FNCI), 102–122 (LLFS…LVNP), 123–143 (LTMW…TLIL), 150–170 (NIVI…AAMT), 177–197 (ALIL…ALAL), 224–244 (VLLY…YGMS), 246–266 (WPYL…GFAL), and 279–299 (FRFS…DHYL).

It belongs to the UbiA prenyltransferase family. Protoheme IX farnesyltransferase subfamily.

It is found in the cell inner membrane. It carries out the reaction heme b + (2E,6E)-farnesyl diphosphate + H2O = Fe(II)-heme o + diphosphate. It functions in the pathway porphyrin-containing compound metabolism; heme O biosynthesis; heme O from protoheme: step 1/1. In terms of biological role, converts heme B (protoheme IX) to heme O by substitution of the vinyl group on carbon 2 of heme B porphyrin ring with a hydroxyethyl farnesyl side group. This chain is Protoheme IX farnesyltransferase, found in Verminephrobacter eiseniae (strain EF01-2).